The following is a 189-amino-acid chain: uncharacterized protein (189 aa).

3 consecutive transmembrane segments (helical) span residues L2–L22, I93–L113, and F116–L136.

It is found in the membrane. This is an uncharacterized protein from Schizosaccharomyces pombe (strain 972 / ATCC 24843) (Fission yeast).